We begin with the raw amino-acid sequence, 124 residues long: Fluoride-specific ion channel FluC 2 (124 aa).

A run of 4 helical transmembrane segments spans residues 9 to 29 (LGIF…STWL), 34 to 54 (DFPW…IYLV), 67 to 87 (LILA…SLML), and 99 to 119 (LSLI…AYYL). Gly-77 and Thr-80 together coordinate Na(+).

The protein belongs to the fluoride channel Fluc/FEX (TC 1.A.43) family.

Its subcellular location is the cell membrane. It catalyses the reaction fluoride(in) = fluoride(out). Na(+) is not transported, but it plays an essential structural role and its presence is essential for fluoride channel function. Fluoride-specific ion channel. Important for reducing fluoride concentration in the cell, thus reducing its toxicity. The polypeptide is Fluoride-specific ion channel FluC 2 (Streptococcus pneumoniae serotype 4 (strain ATCC BAA-334 / TIGR4)).